The following is a 425-amino-acid chain: Sucrose-phosphatase 2 (425 aa).

Belongs to the sucrose phosphatase family. Homodimer. It depends on Mg(2+) as a cofactor.

It carries out the reaction sucrose 6(F)-phosphate + H2O = sucrose + phosphate. It functions in the pathway glycan biosynthesis; sucrose biosynthesis; sucrose from D-fructose 6-phosphate and UDP-alpha-D-glucose: step 2/2. Its activity is regulated as follows. Inhibited by EDTA. Functionally, catalyzes the final step of sucrose synthesis. In Nicotiana tabacum (Common tobacco), this protein is Sucrose-phosphatase 2 (SPP2).